A 317-amino-acid chain; its full sequence is Taste receptor type 2 member 14 (317 aa).

At 1–7 (MGDVIKS) the chain is on the extracellular side. Residues 8-28 (IFTFVLIVEFIIGNLGNSFIA) traverse the membrane as a helical segment. The Cytoplasmic portion of the chain corresponds to 29–55 (LVNCIDWVKGRKISSVDQILTALAISR). A helical membrane pass occupies residues 56-76 (ISLVWLIFGSWCVSVFLPALF). The Extracellular portion of the chain corresponds to 77 to 87 (ATEKMFRMLTN). Positions 86 and 89 each coordinate cholesterol. Residues 88-108 (IWTVINHFSVWLATGLGTFYF) traverse the membrane as a helical segment. Residues 109–129 (LKIANFSNSIFLYLKWRVKKV) are Cytoplasmic-facing. The chain crosses the membrane as a helical span at residues 130-150 (VLVLLLVTSVFLFLNIALINI). Residues 151-184 (HINASINGYRRNKTCSSDSSNFTRFSSLIVLTST) lie on the Extracellular side of the membrane. N-linked (GlcNAc...) asparagine glycosylation is found at asparagine 153, asparagine 162, and asparagine 171. Valine 180 contacts cholesterol. The helical transmembrane segment at 185-205 (VFIFIPFTLSLAMFLLLIFSL) threads the bilayer. Residues 206–232 (WKHRKKMQHXVKRSGDASTKAHRGVKS) are Cytoplasmic-facing. A helical membrane pass occupies residues 233 to 253 (VITFFLLYAIFCLSFFISVWT). Topologically, residues 254-261 (SERLEENL) are extracellular. The helical transmembrane segment at 262 to 282 (IILSQVMGMAYPSCHSCVLIL) threads the bilayer. Cholesterol-binding residues include serine 265 and methionine 268. At 283 to 317 (GNKKLRQASLSVLLWLRYMFKDGEPSGHKEFRESS) the chain is on the cytoplasmic side.

It belongs to the G-protein coupled receptor T2R family. In terms of assembly, core component of the TAS2R14-GNAI1 complex, consisting of TAS2R14, GNAI1, GNB1 and GNG2; within the complex interacts with GNAI1. Core component of the TAS2R14-GNAT3 complex, consisting of TAS2R14, GNAT3, GNB1 and GNG2; within the complex interacts with GNAT3. Core component of the TAS2R14-GNAS2 complex, consisting of TAS2R14, GNAS2, GNB1 and GNG2; within the complex interacts with GNAS2.

It is found in the membrane. It carries out the reaction Ca(2+)(in) = Ca(2+)(out). The catalysed reaction is 3',5'-cyclic AMP(in) = 3',5'-cyclic AMP(out). Its activity is regulated as follows. Basal activity is enhanced by binding to bitter tastants, such as flufenamic acid and aristolochic acid. Regulated by cholesterol in a concentration-dependent manner. Functionally, gustducin-linked G-protein coupled receptor that plays a role in the perception of bitterness. The activity of this receptor stimulates GNAT3, activating the gustducin G-protein pathway. Likely plays a role in sensing the chemical composition of the gastrointestinal content and other extra-oral tissues via the inhibitory G-protein pathways. This Gorilla gorilla gorilla (Western lowland gorilla) protein is Taste receptor type 2 member 14 (TAS2R14).